A 153-amino-acid polypeptide reads, in one-letter code: Endoribonuclease YbeY (153 aa).

Zn(2+) is bound by residues H114, H118, and H124.

Belongs to the endoribonuclease YbeY family. Zn(2+) serves as cofactor.

The protein resides in the cytoplasm. Its function is as follows. Single strand-specific metallo-endoribonuclease involved in late-stage 70S ribosome quality control and in maturation of the 3' terminus of the 16S rRNA. This is Endoribonuclease YbeY from Shewanella baltica (strain OS195).